A 666-amino-acid polypeptide reads, in one-letter code: Protein OS-9 (666 aa).

An N-terminal signal peptide occupies residues 1 to 30 (MAAEALLSSLLGLLFLGLLLPAHLTGGVGS). Residues 108-230 (APCLLKTKDW…SIRTSRLCPH (123 aa)) enclose the MRH domain. Cys-110 and Cys-123 form a disulfide bridge. The a mannooligosaccharide derivative site is built by Trp-117, Trp-118, and Gln-130. The N-linked (GlcNAc...) asparagine glycan is linked to Asn-177. Intrachain disulfides connect Cys-181/Cys-216 and Cys-196/Cys-228. Residues Asp-182, Arg-188, Glu-212, and Tyr-218 each contribute to the a mannooligosaccharide derivative site. Disordered stretches follow at residues 261–356 (RQAE…NVQV), 370–449 (EELK…SDRE), 505–540 (ESQSPELVQKYKKRRVVPQKPPPSPHPTEEEPEHRV), and 631–666 (EANKERQRQSELESNYRRVWGSPGGEDTGDLDEFDF). Basic and acidic residues-rich tracts occupy residues 263 to 281 (AESKQHEEKVTEEVQDTDH) and 294 to 310 (PKKEDVSPTKEDKESEF). Low complexity predominate over residues 320 to 332 (QATGTEEAQAGEQ). 2 stretches are compositionally biased toward basic and acidic residues: residues 370–379 (EELKGAEKGK) and 395–412 (PQREAEAKGKGGEPRGLV). Residues 413–429 (EEEDGDEEEEDEDEDEQ) are compositionally biased toward acidic residues. Basic and acidic residues predominate over residues 434-449 (EFEKELEGMLLPSDRE). A compositionally biased stretch (basic and acidic residues) spans 631–646 (EANKERQRQSELESNY). Over residues 657–666 (DTGDLDEFDF) the composition is skewed to acidic residues.

The protein belongs to the OS-9 family. In terms of assembly, component of the HRD1 complex, which comprises at least SYNV1/HRD1, DERL1/2, FAM8A1, HERPUD1/HERP, OS9, SEL1L and UBE2J1. FAM8A1 is stabilized by interaction with SYNV1, which prevents its proteasomal degradation. OS9 and UBE2J1 recruitment to the complex may be mediated by SEL1L. Through this complex, may interact with ERLEC1 and HSPA5. Interacts (via C-terminus) with CPNE6 (via second C2 domain); this interaction occurs in a calcium-dependent manner in vitro. Interacts with CREB3. Intramolecular disulfide bonds.

The protein resides in the endoplasmic reticulum lumen. Lectin component of the HRD1 complex, which functions in endoplasmic reticulum (ER) quality control and ER-associated degradation (ERAD). Specifically recognizes and binds improperly folded glycoproteins as well as hyperglycosylated proteins, retain them in the ER, and transfers them to the ubiquitination machinery and promote their degradation. Possible targets include TRPV4 as well as hyperglycosylated HSP90B1. In Rattus norvegicus (Rat), this protein is Protein OS-9 (Os9).